A 242-amino-acid polypeptide reads, in one-letter code: DNA repair protein RecO (242 aa).

Belongs to the RecO family.

Functionally, involved in DNA repair and RecF pathway recombination. In Vibrio atlanticus (strain LGP32) (Vibrio splendidus (strain Mel32)), this protein is DNA repair protein RecO.